A 120-amino-acid polypeptide reads, in one-letter code: Spermidine export protein MdtJ (120 aa).

The next 4 helical transmembrane spans lie at 1–21, 31–51, 54–74, and 81–101; these read MFYWILLALAIVAEITGTLSM, TGFILMLVMISLSYIFLSFAV, IALGVAYALWEGIGILLITLF, and EALSTMKIAGLATLVVGIVLI.

It belongs to the drug/metabolite transporter (DMT) superfamily. Small multidrug resistance (SMR) (TC 2.A.7.1) family. MdtJ subfamily. In terms of assembly, forms a complex with MdtI.

It is found in the cell inner membrane. Its function is as follows. Catalyzes the excretion of spermidine. The chain is Spermidine export protein MdtJ from Enterobacter sp. (strain 638).